The sequence spans 460 residues: Tyrosine phenol-lyase (460 aa).

Lys260 carries the post-translational modification N6-(pyridoxal phosphate)lysine.

The protein belongs to the beta-eliminating lyase family. Homotetramer. Requires pyridoxal 5'-phosphate as cofactor.

The catalysed reaction is L-tyrosine + H2O = phenol + pyruvate + NH4(+). This chain is Tyrosine phenol-lyase, found in Clostridium tetani (strain Massachusetts / E88).